Reading from the N-terminus, the 649-residue chain is Threonine--tRNA ligase (649 aa).

Residues 1–61 (MIKITFPDGA…TQDGSIEIVT (61 aa)) enclose the TGS domain. Positions 242–540 (DHRKLGKELD…LIETYKGAFP (299 aa)) are catalytic. Residues Cys336, His387, and His517 each contribute to the Zn(2+) site.

This sequence belongs to the class-II aminoacyl-tRNA synthetase family. In terms of assembly, homodimer. Zn(2+) serves as cofactor.

It localises to the cytoplasm. It catalyses the reaction tRNA(Thr) + L-threonine + ATP = L-threonyl-tRNA(Thr) + AMP + diphosphate + H(+). Its function is as follows. Catalyzes the attachment of threonine to tRNA(Thr) in a two-step reaction: L-threonine is first activated by ATP to form Thr-AMP and then transferred to the acceptor end of tRNA(Thr). Also edits incorrectly charged L-seryl-tRNA(Thr). The chain is Threonine--tRNA ligase from Streptococcus mutans serotype c (strain ATCC 700610 / UA159).